The chain runs to 434 residues: Progestin and adipoQ receptor-like protein 1 (434 aa).

Over 1–201 (MNPDEVNRAL…KSIWSLHTET (201 aa)) the chain is Cytoplasmic. Disordered regions lie at residues 74–103 (LPQQ…MPKH) and 118–137 (EINL…ELEV). Residues 202-222 (GNIWTHLIGCVAFFFLACWFL) form a helical membrane-spanning segment. The Extracellular portion of the chain corresponds to 223–234 (TRPDNHIQFQEK). A helical transmembrane segment spans residues 235-255 (VVFSFFFAGAVLCLGLSFAFH). Over 256–273 (TLSCHSVNVVKIFCKLDY) the chain is Cytoplasmic. The helical transmembrane segment at 274–294 (MGISLLIIGSFIPWIYYGFYC) threads the bilayer. Over 295 to 299 (RREPK) the chain is Extracellular. A helical transmembrane segment spans residues 300 to 320 (ITYIAMVSVLGIGAIVVSLWD). Residues 321–331 (KFSESRFRPIR) lie on the Cytoplasmic side of the membrane. A helical transmembrane segment spans residues 332–352 (AAVFVGMGCSGVIPTIHYIIT). At 353–362 (DGVHSLFADN) the chain is on the extracellular side. The chain crosses the membrane as a helical span at residues 363 to 383 (SFHWLLLMAFLYLLGAGLYAT). Residues 384-403 (RTPERFFPGKCDIWFQSHQL) lie on the Cytoplasmic side of the membrane. A helical membrane pass occupies residues 404–424 (FHTCVVIAAFVHYYGISEMAF). The Extracellular segment spans residues 425-434 (ARLNEQCPVR).

It belongs to the ADIPOR family.

Its subcellular location is the membrane. Functionally, probable receptor, which may be involved in metabolic pathways that regulate lipid metabolism such as fatty acid oxidation. The chain is Progestin and adipoQ receptor-like protein 1 (paqr-1) from Caenorhabditis elegans.